The chain runs to 574 residues: K(+)/H(+) antiporter NhaP2 (574 aa).

13 helical membrane passes run 6–26, 34–54, 58–78, 87–107, 109–129, 173–193, 196–216, 219–239, 242–262, 271–291, 299–319, 335–355, and 359–379; these read INSF…LSPV, ILLI…GGIL, YSTA…DGGM, VALW…TSIT, VMAA…GAIV, IAIL…ISFI, FGLG…LVNL, LAEG…YAAS, LGGS…NKPT, VLDG…GLLL, IWLP…PLAV, WFIS…VFPM, and LPGA…SLLV. The 82-residue stretch at 405–486 folds into the RCK C-terminal domain; sequence SGVEIYPSSE…LEALSNLFSQ (82 aa).

The protein belongs to the monovalent cation:proton antiporter 1 (CPA1) transporter (TC 2.A.36) family. NhaP2 subfamily.

It is found in the cell inner membrane. The catalysed reaction is K(+)(in) + H(+)(out) = K(+)(out) + H(+)(in). In terms of biological role, k(+)/H(+) antiporter that extrudes potassium in exchange for external protons and maintains the internal concentration of potassium under toxic levels. The chain is K(+)/H(+) antiporter NhaP2 from Shewanella sp. (strain ANA-3).